Here is a 424-residue protein sequence, read N- to C-terminus: tRNA(Ile)-lysidine synthase (424 aa).

Residue 26–31 (SGGIDS) participates in ATP binding.

This sequence belongs to the tRNA(Ile)-lysidine synthase family.

It localises to the cytoplasm. It carries out the reaction cytidine(34) in tRNA(Ile2) + L-lysine + ATP = lysidine(34) in tRNA(Ile2) + AMP + diphosphate + H(+). Ligates lysine onto the cytidine present at position 34 of the AUA codon-specific tRNA(Ile) that contains the anticodon CAU, in an ATP-dependent manner. Cytidine is converted to lysidine, thus changing the amino acid specificity of the tRNA from methionine to isoleucine. This chain is tRNA(Ile)-lysidine synthase, found in Streptococcus agalactiae serotype V (strain ATCC BAA-611 / 2603 V/R).